The chain runs to 320 residues: ATP synthase gamma chain (320 aa).

This sequence belongs to the ATPase gamma chain family. F-type ATPases have 2 components, CF(1) - the catalytic core - and CF(0) - the membrane proton channel. CF(1) has five subunits: alpha(3), beta(3), gamma(1), delta(1), epsilon(1). CF(0) has three main subunits: a, b and c.

It is found in the cell membrane. Produces ATP from ADP in the presence of a proton gradient across the membrane. The gamma chain is believed to be important in regulating ATPase activity and the flow of protons through the CF(0) complex. In Lactobacillus helveticus (strain DPC 4571), this protein is ATP synthase gamma chain.